Here is a 169-residue protein sequence, read N- to C-terminus: Ribosome maturation factor RimM (169 aa).

A PRC barrel domain is found at 94-166 (EEGFYDHELE…TATITPPDGL (73 aa)).

Belongs to the RimM family. In terms of assembly, binds ribosomal protein uS19.

The protein resides in the cytoplasm. Its function is as follows. An accessory protein needed during the final step in the assembly of 30S ribosomal subunit, possibly for assembly of the head region. Essential for efficient processing of 16S rRNA. May be needed both before and after RbfA during the maturation of 16S rRNA. It has affinity for free ribosomal 30S subunits but not for 70S ribosomes. This is Ribosome maturation factor RimM from Corynebacterium efficiens (strain DSM 44549 / YS-314 / AJ 12310 / JCM 11189 / NBRC 100395).